The chain runs to 156 residues: Arginine repressor (156 aa).

It belongs to the ArgR family.

The protein resides in the cytoplasm. It participates in amino-acid biosynthesis; L-arginine biosynthesis [regulation]. In terms of biological role, regulates arginine biosynthesis genes. This Yersinia enterocolitica serotype O:8 / biotype 1B (strain NCTC 13174 / 8081) protein is Arginine repressor.